The primary structure comprises 60 residues: Large ribosomal subunit protein bL32 (60 aa).

Over residues 1–16 (MAVPKKKTSKSRKNMR) the composition is skewed to basic residues. Residues 1–20 (MAVPKKKTSKSRKNMRRAHD) are disordered.

It belongs to the bacterial ribosomal protein bL32 family.

This chain is Large ribosomal subunit protein bL32, found in Geobacter metallireducens (strain ATCC 53774 / DSM 7210 / GS-15).